A 247-amino-acid polypeptide reads, in one-letter code: ABC-type transporter ATP-binding protein EcsA (247 aa).

In terms of domain architecture, ABC transporter spans 4 to 234 (LSVKDLTGGY…FGMKDAALDD (231 aa)). 36–43 (GLNGAGKS) serves as a coordination point for ATP.

The protein belongs to the ABC transporter superfamily.

In terms of biological role, has a role in exoprotein production, sporulation and competence. This is ABC-type transporter ATP-binding protein EcsA (ecsA) from Bacillus subtilis (strain 168).